A 283-amino-acid chain; its full sequence is Pantothenate synthetase (283 aa).

34 to 41 (MGALHDGH) contacts ATP. The active-site Proton donor is histidine 41. (R)-pantoate is bound at residue glutamine 65. Beta-alanine is bound at residue glutamine 65. 152–155 (GEKD) contacts ATP. Glutamine 158 is a binding site for (R)-pantoate. ATP contacts are provided by residues valine 181 and 189–192 (MSSR).

Belongs to the pantothenate synthetase family. In terms of assembly, homodimer.

Its subcellular location is the cytoplasm. It carries out the reaction (R)-pantoate + beta-alanine + ATP = (R)-pantothenate + AMP + diphosphate + H(+). The protein operates within cofactor biosynthesis; (R)-pantothenate biosynthesis; (R)-pantothenate from (R)-pantoate and beta-alanine: step 1/1. Catalyzes the condensation of pantoate with beta-alanine in an ATP-dependent reaction via a pantoyl-adenylate intermediate. The polypeptide is Pantothenate synthetase (Bradyrhizobium sp. (strain BTAi1 / ATCC BAA-1182)).